A 304-amino-acid chain; its full sequence is Putative S-adenosyl-L-methionine-dependent methyltransferase Mjls_1071 (304 aa).

S-adenosyl-L-methionine contacts are provided by residues aspartate 130 and 159–160 (DL).

It belongs to the UPF0677 family.

Exhibits S-adenosyl-L-methionine-dependent methyltransferase activity. The chain is Putative S-adenosyl-L-methionine-dependent methyltransferase Mjls_1071 from Mycobacterium sp. (strain JLS).